The sequence spans 56 residues: MAVQQNKKSRSRRDMRRSHDALTTAAVSVDKASGETHLRHHVTADGYYRGRKVINK.

The tract at residues 1–37 (MAVQQNKKSRSRRDMRRSHDALTTAAVSVDKASGETH) is disordered. Positions 7–16 (KKSRSRRDMR) are enriched in basic residues.

Belongs to the bacterial ribosomal protein bL32 family.

In Haemophilus influenzae (strain PittEE), this protein is Large ribosomal subunit protein bL32.